A 289-amino-acid chain; its full sequence is MIKVEIDEGSGFCFGVVTAIHKAEEELAKGETLYCLGDIVHNSREVERLKAMGLITINRDEFRQLRNAKVLLRAHGEPPETYQIAHKNNIEIIDATCPVVLRLQKRIKQEFRKEDFEEKQIVIYGKNGHAEVLGLVGQTGGQAIVIESAEEAKKLDFTKSIRLFSQTTKSLDEFQEIVEYIKLHISPDATFEYYDTICRQVANRMPNLREFAATHDLIFFVSGKKSSNGKMLFEECLKVNANSHLIDNEKEIDPTLLRNVKSIGVCGATSTPKWLMEKIHDHIQLLIKD.

Residue cysteine 13 coordinates [4Fe-4S] cluster. The (2E)-4-hydroxy-3-methylbut-2-enyl diphosphate site is built by histidine 41 and histidine 75. Positions 41 and 75 each coordinate dimethylallyl diphosphate. Isopentenyl diphosphate contacts are provided by histidine 41 and histidine 75. Cysteine 97 serves as a coordination point for [4Fe-4S] cluster. Histidine 129 lines the (2E)-4-hydroxy-3-methylbut-2-enyl diphosphate pocket. Histidine 129 lines the dimethylallyl diphosphate pocket. Histidine 129 provides a ligand contact to isopentenyl diphosphate. The Proton donor role is filled by glutamate 131. Residue threonine 167 coordinates (2E)-4-hydroxy-3-methylbut-2-enyl diphosphate. Cysteine 198 lines the [4Fe-4S] cluster pocket. The (2E)-4-hydroxy-3-methylbut-2-enyl diphosphate site is built by serine 226, serine 227, asparagine 228, and serine 270. Dimethylallyl diphosphate is bound by residues serine 226, serine 227, asparagine 228, and serine 270. Isopentenyl diphosphate contacts are provided by serine 226, serine 227, asparagine 228, and serine 270.

It belongs to the IspH family. It depends on [4Fe-4S] cluster as a cofactor.

It catalyses the reaction isopentenyl diphosphate + 2 oxidized [2Fe-2S]-[ferredoxin] + H2O = (2E)-4-hydroxy-3-methylbut-2-enyl diphosphate + 2 reduced [2Fe-2S]-[ferredoxin] + 2 H(+). The enzyme catalyses dimethylallyl diphosphate + 2 oxidized [2Fe-2S]-[ferredoxin] + H2O = (2E)-4-hydroxy-3-methylbut-2-enyl diphosphate + 2 reduced [2Fe-2S]-[ferredoxin] + 2 H(+). It participates in isoprenoid biosynthesis; dimethylallyl diphosphate biosynthesis; dimethylallyl diphosphate from (2E)-4-hydroxy-3-methylbutenyl diphosphate: step 1/1. The protein operates within isoprenoid biosynthesis; isopentenyl diphosphate biosynthesis via DXP pathway; isopentenyl diphosphate from 1-deoxy-D-xylulose 5-phosphate: step 6/6. In terms of biological role, catalyzes the conversion of 1-hydroxy-2-methyl-2-(E)-butenyl 4-diphosphate (HMBPP) into a mixture of isopentenyl diphosphate (IPP) and dimethylallyl diphosphate (DMAPP). Acts in the terminal step of the DOXP/MEP pathway for isoprenoid precursor biosynthesis. The sequence is that of 4-hydroxy-3-methylbut-2-enyl diphosphate reductase from Bacteroides thetaiotaomicron (strain ATCC 29148 / DSM 2079 / JCM 5827 / CCUG 10774 / NCTC 10582 / VPI-5482 / E50).